The sequence spans 376 residues: Zinc transporter 7 (376 aa).

Over 1-37 the chain is Cytoplasmic; sequence MLPLSIKDDEYKPPKFNLFRKISGWFRSILSDKTSRN. A helical transmembrane segment spans residues 38-58; sequence LFFFLCLNLSFAFVELLYGIW. The Lumenal segment spans residues 59-67; the sequence is SNCLGLISD. Residues 68–88 form a helical membrane-spanning segment; sequence SFHMFFDSTAILAGLAASVIS. The Cytoplasmic portion of the chain corresponds to 89–102; the sequence is KWRDNDAFSYGYVR. A helical transmembrane segment spans residues 103–123; sequence AEVLAGFVNGLFLIFTAFFIF. The Lumenal portion of the chain corresponds to 124–140; it reads SEGVERALAPPDVHHER. A helical membrane pass occupies residues 141 to 161; sequence LLLVSILGFVVNLVGIFVFKH. Positions 161-218 are his-rich loop; it reads HGGHGHSHGSGHGHSHSLFNGALDQTHGHGDHCHSHELKHGAAHSHDHAHGHGHFHSH. Over 162 to 236 the chain is Cytoplasmic; it reads GGHGHSHGSG…TGPSRQILQG (75 aa). Positions 188–222 are enriched in basic and acidic residues; the sequence is GHGDHCHSHELKHGAAHSHDHAHGHGHFHSHDGPS. Positions 188-226 are disordered; sequence GHGDHCHSHELKHGAAHSHDHAHGHGHFHSHDGPSLKET. Residues 237-257 form a helical membrane-spanning segment; that stretch reads VFLHILADTLGSIGVIASAIM. At 258–262 the chain is on the lumenal side; it reads MQNFG. The helical transmembrane segment at 263–283 threads the bilayer; the sequence is LMIADPICSILIAMLIVISVI. The Cytoplasmic segment spans residues 284–376; it reads PLLRESVGIL…LYVQIDFAAM (93 aa).

This sequence belongs to the cation diffusion facilitator (CDF) transporter (TC 2.A.4) family. SLC30A subfamily. As to quaternary structure, homooligomer.

The protein localises to the golgi apparatus membrane. The protein resides in the cytoplasmic vesicle. It is found in the golgi apparatus. It localises to the trans-Golgi network. Its subcellular location is the sarcoplasmic reticulum. The protein localises to the mitochondrion. The enzyme catalyses Zn(2+)(in) = Zn(2+)(out). Its function is as follows. Zinc ion transporter mediating zinc entry from the cytosol into the lumen of organelles along the secretory pathway. By contributing to zinc ion homeostasis within the early secretory pathway, regulates the activation and folding of enzymes like alkaline phosphatases. The protein is Zinc transporter 7 (SLC30A7) of Bos taurus (Bovine).